Here is a 321-residue protein sequence, read N- to C-terminus: Pheromone-regulated membrane protein 5 (321 aa).

The tract at residues 35-59 (SSSSSSSSLPLLSNSTSSSIIPSIT) is disordered. A helical membrane pass occupies residues 81 to 101 (FIIVGGIAGVIFLAILLWWVI). Serine 132 bears the Phosphoserine mark. Positions 241–250 (TISSSSASSL) are enriched in low complexity. Positions 241–321 (TISSSSASSL…HMLEGKEQDE (81 aa)) are disordered. The span at 253–264 (GNEKEVGEDIRK) shows a compositional bias: basic and acidic residues. Polar residues predominate over residues 279-288 (SPESDGSVNR). Residues serine 282, serine 285, and serine 291 each carry the phosphoserine modification. A compositionally biased stretch (basic and acidic residues) spans 312–321 (HMLEGKEQDE). A Glycyl lysine isopeptide (Lys-Gly) (interchain with G-Cter in ubiquitin) cross-link involves residue lysine 317.

The protein belongs to the PRM5 family.

The protein resides in the membrane. The polypeptide is Pheromone-regulated membrane protein 5 (PRM5) (Saccharomyces cerevisiae (strain YJM789) (Baker's yeast)).